The chain runs to 491 residues: MAGQGLPLHVATLLTGLLECLGFAGVLFGWPSLVFVFKNEDYFKDLCGPDAGPIGNATGQADCKAQDERFSLIFTLGSFMNNFMTFPTGYIFDRFKTTVARLIAIFFYTTATLIIAFTSAGSAVLLFLAMPMLTIGGILFLITNLQIGNLFGQHRSTIITLYNGAFDSSSAVFLIIKLLYEKGISLRASFIFISVCSTWHVARTFLLMPRGHIPYPLPPNYSYGLCPGNGTTKEEKETAEHENRELQSKEFLSAKEETPGAGQKQELRSFWSYAFSRRFAWHLVWLSVIQLWHYLFIGTLNSLLTNMAGGDMARVSTYTNAFAFTQFGVLCAPWNGLLMDRLKQKYQKEARKTGSSTLAVALCSTVPSLALTSLLCLGFALCASVPILPLQYLTFILQVISRSFLYGSNAAFLTLAFPSEHFGKLFGLVMALSAVVSLLQFPIFTLIKGSLQNDPFYVNVMFMLAILLTFFHPFLVYRECRTWKESPSAIA.

A helical membrane pass occupies residues 17-37; the sequence is LLECLGFAGVLFGWPSLVFVF. The N-linked (GlcNAc...) asparagine glycan is linked to Asn56. The next 5 helical transmembrane spans lie at 72 to 92, 102 to 122, 123 to 143, 156 to 176, and 188 to 208; these read LIFT…GYIF, LIAI…SAGS, AVLL…FLIT, STII…FLII, and ASFI…FLLM. N-linked (GlcNAc...) asparagine glycans are attached at residues Asn220 and Asn229. The residue at position 253 (Ser253) is a Phosphoserine. Thr258 is subject to Phosphothreonine. 6 helical membrane-spanning segments follow: residues 279–299, 319–339, 356–376, 396–418, 427–447, and 456–476; these read FAWH…FIGT, TNAF…GLLM, STLA…SLLC, ILQV…LAFP, GLVM…FTLI, and FYVN…PFLV.

The protein belongs to the SLC43A transporter (TC 2.A.1.44) family. Widely expressed with highest levels in the liver and lung, followed by the pancreas. Highly expressed in macrophages.

The protein localises to the basolateral cell membrane. The catalysed reaction is adenine(out) = adenine(in). It carries out the reaction guanine(out) = guanine(in). The enzyme catalyses hypoxanthine(out) = hypoxanthine(in). With respect to regulation, adenine transport is strongly inhibited by decynium-22. Its activity is regulated as follows. 6-mercaptopurine-transport is inhibited by 6-thioguanine, 6-methylmercaptopurine and decynium-22. In terms of biological role, sodium-independent purine-selective nucleobase transporter which mediates the equilibrative transport of extracellular purine nucleobases such as adenine, guanine and hypoxanthine. May regulate fatty acid (FA) transport in adipocytes, acting as a positive regulator of FA efflux and as a negative regulator of FA uptake. Its function is as follows. Sodium-independent purine-selective nucleobase transporter which mediates the equilibrative transport of extracellular purine nucleobase adenine. Mediates the influx and efflux of the purine nucleobase analog drug 6-mercaptopurine across the membrane. This Homo sapiens (Human) protein is Equilibrative nucleobase transporter 1 (SLC43A3).